Reading from the N-terminus, the 313-residue chain is Malate dehydrogenase (313 aa).

NAD(+) contacts are provided by residues 8–13 (GAGNVG) and Asp-33. The substrate site is built by Arg-83 and Arg-89. NAD(+) contacts are provided by residues Asn-96 and 119 to 121 (ISN). The substrate site is built by Asn-121 and Arg-152. Residue His-176 is the Proton acceptor of the active site.

This sequence belongs to the LDH/MDH superfamily. MDH type 3 family.

It carries out the reaction (S)-malate + NAD(+) = oxaloacetate + NADH + H(+). Functionally, catalyzes the reversible oxidation of malate to oxaloacetate. This is Malate dehydrogenase from Bacteroides thetaiotaomicron (strain ATCC 29148 / DSM 2079 / JCM 5827 / CCUG 10774 / NCTC 10582 / VPI-5482 / E50).